A 133-amino-acid polypeptide reads, in one-letter code: Agglutinin alpha chain (133 aa).

Positions 1–133 (GVTFDDGAYT…LDYFSIYLSL (133 aa)) constitute a Jacalin-type lectin domain.

This sequence belongs to the jacalin lectin family. In terms of assembly, formed of four alpha chains and four beta chains.

D-galactose-specific lectin, binds the T-antigen structure Gal-beta1,3-GalNAc. In Maclura pomifera (Osage orange), this protein is Agglutinin alpha chain.